The chain runs to 281 residues: Bifunctional protein FolD (281 aa).

NADP(+) is bound by residues 164 to 166 (GRS) and Ser189.

It belongs to the tetrahydrofolate dehydrogenase/cyclohydrolase family. In terms of assembly, homodimer.

It carries out the reaction (6R)-5,10-methylene-5,6,7,8-tetrahydrofolate + NADP(+) = (6R)-5,10-methenyltetrahydrofolate + NADPH. It catalyses the reaction (6R)-5,10-methenyltetrahydrofolate + H2O = (6R)-10-formyltetrahydrofolate + H(+). It functions in the pathway one-carbon metabolism; tetrahydrofolate interconversion. Catalyzes the oxidation of 5,10-methylenetetrahydrofolate to 5,10-methenyltetrahydrofolate and then the hydrolysis of 5,10-methenyltetrahydrofolate to 10-formyltetrahydrofolate. The protein is Bifunctional protein FolD of Enterococcus faecalis (strain ATCC 700802 / V583).